A 211-amino-acid chain; its full sequence is Protein GrpE (211 aa).

A compositionally biased stretch (basic and acidic residues) spans 1–13 (MVDKDEEQIKQNV). Positions 1–38 (MVDKDEEQIKQNVEEDLSSTVEQTGEENIEFPSAPNHP) are disordered.

This sequence belongs to the GrpE family. As to quaternary structure, homodimer.

The protein resides in the cytoplasm. In terms of biological role, participates actively in the response to hyperosmotic and heat shock by preventing the aggregation of stress-denatured proteins, in association with DnaK and GrpE. It is the nucleotide exchange factor for DnaK and may function as a thermosensor. Unfolded proteins bind initially to DnaJ; upon interaction with the DnaJ-bound protein, DnaK hydrolyzes its bound ATP, resulting in the formation of a stable complex. GrpE releases ADP from DnaK; ATP binding to DnaK triggers the release of the substrate protein, thus completing the reaction cycle. Several rounds of ATP-dependent interactions between DnaJ, DnaK and GrpE are required for fully efficient folding. In Protochlamydia amoebophila (strain UWE25), this protein is Protein GrpE.